A 380-amino-acid chain; its full sequence is Outer membrane protein 40 (380 aa).

Residues 1–21 form the signal peptide; that stretch reads MKAKSLLLALAGLACTFSATA. Gln-22 carries the post-translational modification Pyrrolidone carboxylic acid. Residues 270-380 enclose the OmpA-like domain; the sequence is PTVTRVVVDN…NRIVVMTAAE (111 aa).

Belongs to the outer membrane OOP (TC 1.B.6) superfamily. In terms of assembly, disulfide-linked heterodimer with Omp41.

It is found in the cell outer membrane. Functionally, may have porin activity and function in peptidoglycan binding. This Porphyromonas gingivalis (strain ATCC BAA-308 / W83) protein is Outer membrane protein 40.